Consider the following 577-residue polypeptide: Sensor protein ChvG (577 aa).

Residues 1–29 (MRGQRRWAHPFTLIRRLFGNAVFSSLTRR) are Cytoplasmic-facing. Residues 30-50 (IVFFNLVALVVLVGGIMYLNQ) traverse the membrane as a helical segment. The Periplasmic segment spans residues 51–260 (FREGLIDARV…DIDKIVHAER (210 aa)). The chain crosses the membrane as a helical span at residues 261–281 (LAIIRVFGVAALVNVILSLLL). Residues 282–577 (SSTIANPLRR…VLSLPAGPHP (296 aa)) lie on the Cytoplasmic side of the membrane. The region spanning 283 to 339 (STIANPLRRLSAAAIRVRRGGAKEREEIPDFSSRQDEIGNLSVALREMTTALYDRIA) is the HAMP domain. In terms of domain architecture, Histidine kinase spans 347 to 575 (DVSHELKNPL…RFVLSLPAGP (229 aa)). The residue at position 350 (H350) is a Phosphohistidine.

In terms of assembly, homodimer.

It localises to the cell inner membrane. The catalysed reaction is ATP + protein L-histidine = ADP + protein N-phospho-L-histidine.. Its pathway is glycan metabolism; exopolysaccharide biosynthesis. Member of a two-component regulatory system ChvG(ExoS)/ChvI involved in regulating the production of succinoglycan. Activates ChvI by phosphorylation. This chain is Sensor protein ChvG (chvG), found in Rhizobium meliloti (strain 1021) (Ensifer meliloti).